A 160-amino-acid polypeptide reads, in one-letter code: Serine-protein kinase RsbW (160 aa).

It belongs to the anti-sigma-factor family.

The catalysed reaction is L-seryl-[protein] + ATP = O-phospho-L-seryl-[protein] + ADP + H(+). It catalyses the reaction L-threonyl-[protein] + ATP = O-phospho-L-threonyl-[protein] + ADP + H(+). Functionally, negative regulator of sigma-B activity. Phosphorylates and inactivates its specific antagonist protein, RsbV. Upon phosphorylation of RsbV, RsbW is released and binds to sigma-B, thereby blocking its ability to form an RNA polymerase holoenzyme (E-sigma-B). In Bacillus cereus (strain AH187), this protein is Serine-protein kinase RsbW.